Consider the following 318-residue polypeptide: MSRQPIRIGARGSKLSLAQSGLMQARIAAALGAGPGDDIDAFAQLIPIVTSGDRIQDRRLMEIGGKGLFTKEIEEALLDGRIDCAIHSLKDMPAELPPGLVLAAVPEREDPRDAFISHVAERLEDLSKGARLGTASLRRQAQALHVRPDLEIVMLRGNVDTRLAKLERGEADAILLAQSGLNRLGLGHITNSWLDPLAAPPAPGQGALVIETRAEDVDLPWLQAVRCQATTLAVAAERGALYALEGSCRTAVGAHARLDGLILTMIVEALTPDGVQRFRREGSATLSSLDAADQARALGLELGGAVRAEGGPALILTE.

Residue cysteine 248 is modified to S-(dipyrrolylmethanemethyl)cysteine.

The protein belongs to the HMBS family. In terms of assembly, monomer. Dipyrromethane is required as a cofactor.

It carries out the reaction 4 porphobilinogen + H2O = hydroxymethylbilane + 4 NH4(+). It participates in porphyrin-containing compound metabolism; protoporphyrin-IX biosynthesis; coproporphyrinogen-III from 5-aminolevulinate: step 2/4. Functionally, tetrapolymerization of the monopyrrole PBG into the hydroxymethylbilane pre-uroporphyrinogen in several discrete steps. This Caulobacter sp. (strain K31) protein is Porphobilinogen deaminase.